A 149-amino-acid chain; its full sequence is Ribonuclease-like 3 (149 aa).

Positions 1 to 22 (MGIHQCTAVVLLLLCASLSTYG) are cleaved as a signal peptide. A Pyrrolidone carboxylic acid modification is found at Gln23. His38 (proton acceptor) is an active-site residue. Cystine bridges form between Cys48–Cys109, Cys66–Cys120, and Cys84–Cys135. 67-71 (KEVNT) serves as a coordination point for substrate. The Proton donor role is filled by His142.

This sequence belongs to the pancreatic ribonuclease family. Post-translationally, cleavage between Arg-55 and Arg-56 is catalyzed by a membrane-localized Gram-negative bacterium protease (OmpT in E.coli). The excised fragment is then transported to the bacterium cytosol for cleavage of the disulfide bridge linking Cys-48 and Cys-109, thus separating the N-terminal and LF-ZF3. LF-ZF3 but not the N-terminal peptide possesses bactericidal activity. Strongly expressed in the adult liver and gut, and weakly in the heart and testis.

The protein localises to the secreted. Its function is as follows. Ribonuclease. Angiogenic. Plays a role in host defense. Exhibits strong antibacterial activity against Gram-negative bacteria but mild antibacterial activity against Gram-positive bacteria. The RNase activity is not required for the bactericidal activity. This Danio rerio (Zebrafish) protein is Ribonuclease-like 3.